The chain runs to 171 residues: Ribosome maturation factor RimP (171 aa).

It belongs to the RimP family.

It localises to the cytoplasm. Required for maturation of 30S ribosomal subunits. The polypeptide is Ribosome maturation factor RimP (Anaeromyxobacter dehalogenans (strain 2CP-1 / ATCC BAA-258)).